Reading from the N-terminus, the 262-residue chain is Ribosomal RNA small subunit methyltransferase A (262 aa).

Positions 16, 18, 43, 64, 89, and 109 each coordinate S-adenosyl-L-methionine.

This sequence belongs to the class I-like SAM-binding methyltransferase superfamily. rRNA adenine N(6)-methyltransferase family. RsmA subfamily.

The protein resides in the cytoplasm. It carries out the reaction adenosine(1518)/adenosine(1519) in 16S rRNA + 4 S-adenosyl-L-methionine = N(6)-dimethyladenosine(1518)/N(6)-dimethyladenosine(1519) in 16S rRNA + 4 S-adenosyl-L-homocysteine + 4 H(+). In terms of biological role, specifically dimethylates two adjacent adenosines (A1518 and A1519) in the loop of a conserved hairpin near the 3'-end of 16S rRNA in the 30S particle. May play a critical role in biogenesis of 30S subunits. This is Ribosomal RNA small subunit methyltransferase A from Xanthomonas campestris pv. campestris (strain B100).